Here is a 304-residue protein sequence, read N- to C-terminus: Putative AraC-like transcription regulator (304 aa).

The HTH araC/xylS-type domain maps to 202 to 300 (ATALTCLHRD…GMPPGDYRKH (99 aa)). 2 DNA-binding regions (H-T-H motif) span residues 219–240 (ADLADTAAVSRSTLAARFKATV) and 267–290 (LASIAHSVGYGSESALSVAFKRVL).

The polypeptide is Putative AraC-like transcription regulator (Streptomyces lividans).